The sequence spans 275 residues: Formamidopyrimidine-DNA glycosylase (275 aa).

P2 acts as the Schiff-base intermediate with DNA in catalysis. The Proton donor role is filled by E3. K58 serves as the catalytic Proton donor; for beta-elimination activity. DNA contacts are provided by H91 and R110. An FPG-type zinc finger spans residues 238-272 (QVYGQTGKSCPRCGQAIVKLKVGGRGTHICPKCQK). R262 serves as the catalytic Proton donor; for delta-elimination activity.

The protein belongs to the FPG family. As to quaternary structure, monomer. The cofactor is Zn(2+).

The catalysed reaction is Hydrolysis of DNA containing ring-opened 7-methylguanine residues, releasing 2,6-diamino-4-hydroxy-5-(N-methyl)formamidopyrimidine.. It carries out the reaction 2'-deoxyribonucleotide-(2'-deoxyribose 5'-phosphate)-2'-deoxyribonucleotide-DNA = a 3'-end 2'-deoxyribonucleotide-(2,3-dehydro-2,3-deoxyribose 5'-phosphate)-DNA + a 5'-end 5'-phospho-2'-deoxyribonucleoside-DNA + H(+). Functionally, involved in base excision repair of DNA damaged by oxidation or by mutagenic agents. Acts as a DNA glycosylase that recognizes and removes damaged bases. Has a preference for oxidized purines, such as 7,8-dihydro-8-oxoguanine (8-oxoG). Has AP (apurinic/apyrimidinic) lyase activity and introduces nicks in the DNA strand. Cleaves the DNA backbone by beta-delta elimination to generate a single-strand break at the site of the removed base with both 3'- and 5'-phosphates. The chain is Formamidopyrimidine-DNA glycosylase from Streptococcus pyogenes serotype M3 (strain ATCC BAA-595 / MGAS315).